A 361-amino-acid chain; its full sequence is 5-exo-hydroxycamphor dehydrogenase (361 aa).

Zn(2+)-binding residues include Cys-40, His-62, Cys-98, Cys-101, Cys-104, and Cys-170.

It belongs to the zinc-containing alcohol dehydrogenase family. Zn(2+) serves as cofactor.

It carries out the reaction (1R,4R,5R)-5-hydroxycamphor + NAD(+) = (1R,4R)-bornane-2,5-dione + NADH + H(+). The protein operates within terpene metabolism; (R)-camphor degradation. In Pseudomonas putida (Arthrobacter siderocapsulatus), this protein is 5-exo-hydroxycamphor dehydrogenase (camD).